The following is a 349-amino-acid chain: Selenide, water dikinase (349 aa).

Residue selenocysteine 19 is part of the active site. A non-standard amino acid (selenocysteine) is located at residue selenocysteine 19. Residues lysine 22 and 50–52 (LGD) each bind ATP. Position 53 (aspartate 53) interacts with Mg(2+). ATP is bound by residues aspartate 69, aspartate 92, and 140 to 142 (GHT). Residue aspartate 92 coordinates Mg(2+). Mg(2+) is bound at residue aspartate 246.

The protein belongs to the selenophosphate synthase 1 family. Class I subfamily. As to quaternary structure, homodimer. It depends on Mg(2+) as a cofactor.

It carries out the reaction hydrogenselenide + ATP + H2O = selenophosphate + AMP + phosphate + 2 H(+). In terms of biological role, synthesizes selenophosphate from selenide and ATP. The sequence is that of Selenide, water dikinase from Methanocaldococcus jannaschii (strain ATCC 43067 / DSM 2661 / JAL-1 / JCM 10045 / NBRC 100440) (Methanococcus jannaschii).